A 599-amino-acid chain; its full sequence is Kinesin light chain 2 (599 aa).

The stretch at 78–143 (ILALSSHLGA…KQHLLFMSQI (66 aa)) forms a coiled coil. Positions 154 to 163 (EKGDVPKDSL) are enriched in basic and acidic residues. Residues 154 to 188 (EKGDVPKDSLDDLFPNEDEQSPAPSPGGGDVAAQH) are disordered. 2 positions are modified to phosphoserine: Ser-174 and Ser-178. 5 TPR repeats span residues 197-230 (LRTL…LEKT), 239-272 (ATML…REKT), 281-314 (AATL…REKV), 323-356 (AKQL…YATR), and 365-398 (AKTK…AHEK). Ser-443 is subject to Phosphoserine. The stretch at 447 to 480 (NTTLRTLGALYRPEGKLEAAHTLEDCASRSRKQG) is one TPR 6 repeat. A disordered region spans residues 492–541 (LLKDGSGRGHRRGSRDVAGPQSESDLEESGPAAEWSGDGSGSLRRSGSFG). 2 positions are modified to phosphoserine: Ser-505 and Ser-515. Low complexity predominate over residues 532 to 541 (GSLRRSGSFG). Phosphoserine is present on residues Ser-574, Ser-575, and Ser-582.

Belongs to the kinesin light chain family. Oligomeric complex composed of two heavy chains and two light chains. Interacts (via TPR repeats) with PLEKHM2.

It localises to the cytoplasm. The protein resides in the cytoskeleton. Its subcellular location is the lysosome membrane. In terms of biological role, kinesin is a microtubule-associated force-producing protein that plays a role in organelle transport. The light chain functions in coupling of cargo to the heavy chain or in the modulation of its ATPase activity. Through binding with PLEKHM2 and ARL8B, recruits kinesin-1 to lysosomes and hence direct lysosomes movement toward microtubule plus ends. In Mus musculus (Mouse), this protein is Kinesin light chain 2.